Here is a 301-residue protein sequence, read N- to C-terminus: Probable alpha-L-glutamate ligase (301 aa).

The ATP-grasp domain occupies 104–287 (LQLMSRKGLG…VASMIIKHIE (184 aa)). ATP-binding positions include K141, 178-179 (EY), D187, and 211-213 (RSN). Positions 248, 260, and 262 each coordinate Mg(2+). 3 residues coordinate Mn(2+): D248, E260, and N262.

Belongs to the RimK family. Mg(2+) is required as a cofactor. Requires Mn(2+) as cofactor.

The chain is Probable alpha-L-glutamate ligase from Marinomonas sp. (strain MWYL1).